A 141-amino-acid polypeptide reads, in one-letter code: Hemoglobin subunit alpha (141 aa).

A Globin domain is found at 1-141; the sequence is VLSDNDKTNV…VSTVLTSKYR (141 aa). At Ser-3 the chain carries Phosphoserine. At Lys-7 the chain carries N6-succinyllysine. The residue at position 8 (Thr-8) is a Phosphothreonine. Lys-11 bears the N6-succinyllysine mark. Lys-16 is subject to N6-acetyllysine; alternate. An N6-succinyllysine; alternate modification is found at Lys-16. Tyr-24 is subject to Phosphotyrosine. Ser-35 carries the post-translational modification Phosphoserine. Lys-40 carries the post-translational modification N6-succinyllysine. His-58 contributes to the O2 binding site. Residue His-87 participates in heme b binding. Residue Ser-102 is modified to Phosphoserine. Thr-108 carries the phosphothreonine modification. Ser-124 is subject to Phosphoserine. Thr-134 and Thr-137 each carry phosphothreonine. Residue Ser-138 is modified to Phosphoserine.

The protein belongs to the globin family. Heterotetramer of two alpha chains and two beta chains. As to expression, red blood cells.

Functionally, involved in oxygen transport from the lung to the various peripheral tissues. Hemopressin acts as an antagonist peptide of the cannabinoid receptor CNR1. Hemopressin-binding efficiently blocks cannabinoid receptor CNR1 and subsequent signaling. This Loxodonta africana (African elephant) protein is Hemoglobin subunit alpha (HBA).